Reading from the N-terminus, the 401-residue chain is Acetate kinase (401 aa).

Residue N9 participates in Mg(2+) binding. K16 contributes to the ATP binding site. A substrate-binding site is contributed by R88. The active-site Proton donor/acceptor is the D147. ATP-binding positions include 207–211 (HLGNG), 282–284 (DCR), and 333–337 (GIGEN). E388 serves as a coordination point for Mg(2+).

This sequence belongs to the acetokinase family. As to quaternary structure, homodimer. Mg(2+) is required as a cofactor. The cofactor is Mn(2+).

Its subcellular location is the cytoplasm. The enzyme catalyses acetate + ATP = acetyl phosphate + ADP. It functions in the pathway metabolic intermediate biosynthesis; acetyl-CoA biosynthesis; acetyl-CoA from acetate: step 1/2. In terms of biological role, catalyzes the formation of acetyl phosphate from acetate and ATP. Can also catalyze the reverse reaction. This Haemophilus influenzae (strain PittEE) protein is Acetate kinase.